We begin with the raw amino-acid sequence, 1245 residues long: MVFGDLNERPLKKRRFFVDEEDTHPPSSEAAPVTTNLDTSTISSAGPEGSDVRQQQLNGAVPFPNVKESSRESPGLGPEDKQDNLLKEDEENNGTVDYEILNHSPSIHAQQDQRVDQGLTNGFGGQPSGERTVSETQAFQSSGGFDTSTFASIIGEHLSPESLEKIRKASGDDLERAVNIYFDGSWKSSNNSLSQPLVAPHQQTLSNPCTPVNESISQTVNTKISKKPNQAPSSRCLSQSSRYIGAFGVGAWATRSGVGLLKHGEHVNVERARSQPVSKRGRGGKLITNQKGDVLTRFTNKSGQEIGRLPRETAEWVSTLIDQKICRFEGICVFAPDRVRVNDTIYLQLWCYLRKEAFLPRNLWNMGDDNRSTAFFEEQESAEEKQLRLRQVALVKLFDEIGLQPTTVNDMTKKHKKEGLLRAAEIAEQYDKTKREGKSNESSEDEESPELEEDQLDTLYKKAQSFDFNMPEAQPPPSFVLNLRKYQRQALHWMLAKEKDKKSGRELSMHPLWEEYTWPTKDVDDKDLPAVEGQAHFYVNPYSGELSLDFPAQEQHCLGGILADEMGLGKTIEMLSLIHSHRNVSPSRQGPSSSTELVRMPSSSSAILPAPNTTLVVAPTSLLSQWESEAMKASEQGTMKVLMYYGVDKSTNLQELCSAGNPAAPNIIITSYGVVLSESRQLAMFNSNTQGGLFSVDFFRVILDEAHVIKNRRSKTARACYELRATHRWVLTGTPIVNRLEDLFSLVRFLQVEPWNNFSFWKTFITVPFESKDYVRALNVVQTVLEPLVLRRTKTMKTPEGEPLVPLPRRTIDIVEVELSEQEREIYDYIFTRAKRTFNDNIEAGTLLKSFSTIFAQILRLRQTCCHPILTRNKTIVADEEDAAATADAANELKDDMDLQELIDRFSASMENADTAEAQDPSAKFTTHALRQIQTESSGECPICSEEPMIDPAVTACWHSACKKCLEDYIRHQTDKGVPPRCFSCRAPVTSRDIFQVIRHQSPSSTPTETDLYSSTPASSPHPAPRISLRRIHPLSPSAHTSAKIHALINHLNRVPANTKSVVFSQFTSFLDLIGAQLTKAGISYVRLDGTMPQKARAEVLAEFNRTETFHQEEIDEDEGPDTPRVRISSKNSRSSPKSPAVLLISLRAGGVGLNLTAASNVFMMDPWWSFAIEAQAIDRVHRMGQLRDVSVTRFIVKDSIEGRMLRVQERKMNIAGSLGLRVGGDGSEDEKRKERIEELKLLFE.

Residues methionine 1 to proline 10 show a composition bias toward basic and acidic residues. Disordered regions lie at residues methionine 1–leucine 85, glutamine 117–phenylalanine 145, and tyrosine 430–aspartate 454. Polar residues-rich tracts occupy residues valine 33 to serine 44 and glycine 129 to phenylalanine 145. A compositionally biased stretch (basic and acidic residues) spans tyrosine 430–glutamate 441. Acidic residues predominate over residues serine 442–aspartate 454. The Helicase ATP-binding domain occupies proline 551 to glutamate 753. Aspartate 564–threonine 571 contributes to the ATP binding site. A DEAH box motif is present at residues aspartate 704–histidine 707. The RING-type zinc finger occupies cysteine 941–arginine 986. Residues arginine 999–tyrosine 1013 show a composition bias toward polar residues. 2 disordered regions span residues arginine 999–alanine 1024 and phenylalanine 1110–lysine 1138. Positions alanine 1047–glycine 1227 constitute a Helicase C-terminal domain. Residues serine 1129 to lysine 1138 show a composition bias toward low complexity.

Belongs to the SNF2/RAD54 helicase family.

Its subcellular location is the cytoplasm. The protein localises to the nucleus. Functionally, probable helicase, member of the UBC2/RAD6 epistasis group. Functions with DNA repair protein RAD18 in error-free postreplication DNA repair. Involved in the maintenance of wild-type rates of instability of simple repetitive sequences such as poly(GT) repeats. Seems to be involved in maintaining a balance which acts in favor of error-prone non-homologous joining during DNA double-strand breaks repairs. In Aspergillus fumigatus (strain ATCC MYA-4609 / CBS 101355 / FGSC A1100 / Af293) (Neosartorya fumigata), this protein is DNA repair protein rad5 (rad5).